Here is a 257-residue protein sequence, read N- to C-terminus: Anamorsin homolog (257 aa).

The N-terminal SAM-like domain stretch occupies residues 1-132 (MSVLALDVAR…ARGTAFALKS (132 aa)). The interval 133-171 (RAVRVNATAADAADAWGASAAADDDELIDESALLTELDV) is linker. [2Fe-2S] cluster-binding residues include Cys181, Cys190, Cys193, and Cys195. Positions 181–195 (CDVGAGKKACKNCTC) are fe-S binding site A. Residues Cys219, Cys222, Cys230, and Cys233 each coordinate [4Fe-4S] cluster. Short sequence motifs (cx2C motif) lie at residues 219 to 222 (CGNC) and 230 to 233 (CAGC). The tract at residues 219 to 233 (CGNCALGDAFRCAGC) is fe-S binding site B.

The protein belongs to the anamorsin family. In terms of assembly, monomer. The cofactor is [2Fe-2S] cluster. Requires [4Fe-4S] cluster as cofactor.

Its subcellular location is the cytoplasm. It is found in the mitochondrion intermembrane space. In terms of biological role, component of the cytosolic iron-sulfur (Fe-S) protein assembly (CIA) machinery. Required for the maturation of extramitochondrial Fe-S proteins. Part of an electron transfer chain functioning in an early step of cytosolic Fe-S biogenesis, facilitating the de novo assembly of a [4Fe-4S] cluster on the cytosolic Fe-S scaffold complex. Electrons are transferred from NADPH via a FAD- and FMN-containing diflavin oxidoreductase. Together with the diflavin oxidoreductase, also required for the assembly of the diferric tyrosyl radical cofactor of ribonucleotide reductase (RNR), probably by providing electrons for reduction during radical cofactor maturation in the catalytic small subunit. The chain is Anamorsin homolog from Ostreococcus lucimarinus (strain CCE9901).